The sequence spans 152 residues: MKVIFMKDVRGKGKRGEIKNVPDGYAQNFLIKRGLAKEANQSAMSQLNAERKAEQRREAEELAEAKDLQKRLEDDKTVVEIVAKAGEDSRLFGSIPSKQIVQALDKQYNLKLDKRKVELPEPIRSLGFTNVPVKLHADVTAKIRVHVVAKQQ.

Residues 41–61 (QSAMSQLNAERKAEQRREAEE) form a disordered region. Residues 49 to 61 (AERKAEQRREAEE) are compositionally biased toward basic and acidic residues.

It belongs to the bacterial ribosomal protein bL9 family.

In terms of biological role, binds to the 23S rRNA. In Levilactobacillus brevis (strain ATCC 367 / BCRC 12310 / CIP 105137 / JCM 1170 / LMG 11437 / NCIMB 947 / NCTC 947) (Lactobacillus brevis), this protein is Large ribosomal subunit protein bL9.